A 792-amino-acid chain; its full sequence is Phenylalanine--tRNA ligase beta subunit (792 aa).

Positions 40-156 (FPRTENLIVG…AKLNDIDPLK (117 aa)) constitute a tRNA-binding domain. Residues 404–472 (LKDNLIDFDS…KKINVNNLEL (69 aa)) enclose the B5 domain. The Mg(2+) site is built by aspartate 450, aspartate 456, glutamate 459, and glutamate 460.

The protein belongs to the phenylalanyl-tRNA synthetase beta subunit family. Type 1 subfamily. In terms of assembly, tetramer of two alpha and two beta subunits. Requires Mg(2+) as cofactor.

The protein localises to the cytoplasm. The catalysed reaction is tRNA(Phe) + L-phenylalanine + ATP = L-phenylalanyl-tRNA(Phe) + AMP + diphosphate + H(+). The sequence is that of Phenylalanine--tRNA ligase beta subunit from Malacoplasma penetrans (strain HF-2) (Mycoplasma penetrans).